The sequence spans 188 residues: UPF0301 protein Cag_1601 (188 aa).

The protein belongs to the UPF0301 (AlgH) family.

This is UPF0301 protein Cag_1601 from Chlorobium chlorochromatii (strain CaD3).